We begin with the raw amino-acid sequence, 287 residues long: Neugrin (287 aa).

The signal sequence occupies residues methionine 1 to alanine 23. The segment at serine 149 to valine 169 is disordered. Asparagine 202 is a glycosylation site (N-linked (GlcNAc...) asparagine).

The protein belongs to the neugrin family. As to quaternary structure, forms a regulatory protein-RNA complex, consisting of RCC1L, NGRN, RPUSD3, RPUSD4, TRUB2, FASTKD2 and 16S mt-rRNA. Interacts with 16S mt-rRNA; this interaction is direct.

The protein resides in the nucleus. It localises to the secreted. Its subcellular location is the mitochondrion membrane. Functionally, plays an essential role in mitochondrial ribosome biogenesis. As a component of a functional protein-RNA module, consisting of RCC1L, NGRN, RPUSD3, RPUSD4, TRUB2, FASTKD2 and 16S mitochondrial ribosomal RNA (16S mt-rRNA), controls 16S mt-rRNA abundance and is required for intra-mitochondrial translation of core subunits of the oxidative phosphorylation system. The sequence is that of Neugrin (NGRN) from Bos taurus (Bovine).